We begin with the raw amino-acid sequence, 391 residues long: MDTFLFTSESVNEGHPDKLCDQVSDAILDACLEQDPESKVACETCTKTNMVMVFGEITTKAKVNYEKIVRDTCRGIGFVSADVGLDADNCKVLVNIEQQSPDIAQGVHGHLTKKPEEIGAGDQGHMFGYATDETPELMPLTHVLATKLGAKLTEVRKNGTCPWLRPDGKTQVTVEYRNEGGAMVPIRVHTVLVSTQHDETVTNEQIAKDLKEHVIKPVIPPQYLDDQTIFHLNPSGRFVIGGPHGDAGLTGRKIIIDTYGGWGAHGGGAFSGKDPTKVDRSGAYIVRQAAKSVVASGLARRCIVQVSYAIGVPEPLSVFVDTYKTGKIPDKDILALIKKNFDFRPGMISINLDLKRGGNFRFQKTAAYGHFGRDDPDFSWETVKQLKPEKA.

Glu-9 serves as a coordination point for Mg(2+). Position 15 (His-15) interacts with ATP. Glu-43 is a K(+) binding site. L-methionine contacts are provided by Glu-56 and Gln-99. ATP is bound by residues 167-169, 235-238, Asp-246, 252-253, Ala-269, Lys-273, and Lys-277; these read DGK, SGRF, and RK. Residue Asp-246 participates in L-methionine binding. L-methionine is bound at residue Lys-277.

It belongs to the AdoMet synthase family. In terms of assembly, homotetramer. It depends on Mn(2+) as a cofactor. The cofactor is Mg(2+). Co(2+) is required as a cofactor. K(+) serves as cofactor.

It is found in the cytoplasm. It carries out the reaction L-methionine + ATP + H2O = S-adenosyl-L-methionine + phosphate + diphosphate. It functions in the pathway amino-acid biosynthesis; S-adenosyl-L-methionine biosynthesis; S-adenosyl-L-methionine from L-methionine: step 1/1. Catalyzes the formation of S-adenosylmethionine from methionine and ATP. The reaction comprises two steps that are both catalyzed by the same enzyme: formation of S-adenosylmethionine (AdoMet) and triphosphate, and subsequent hydrolysis of the triphosphate. This is S-adenosylmethionine synthase 1 (METK1) from Vitis vinifera (Grape).